Consider the following 106-residue polypeptide: ATP-dependent Clp protease adapter protein ClpS (106 aa).

The segment at 1 to 20 (MKVDMSTSVKDDAQLEASRV) is disordered.

It belongs to the ClpS family. As to quaternary structure, binds to the N-terminal domain of the chaperone ClpA.

Involved in the modulation of the specificity of the ClpAP-mediated ATP-dependent protein degradation. This Chromobacterium violaceum (strain ATCC 12472 / DSM 30191 / JCM 1249 / CCUG 213 / NBRC 12614 / NCIMB 9131 / NCTC 9757 / MK) protein is ATP-dependent Clp protease adapter protein ClpS.